Reading from the N-terminus, the 368-residue chain is tRNA-specific 2-thiouridylase MnmA (368 aa).

ATP is bound by residues 11 to 18 and Met-37; that span reads GMSGGVDS. The segment at 97 to 99 is interaction with target base in tRNA; the sequence is NPD. Cys-102 acts as the Nucleophile in catalysis. An intrachain disulfide couples Cys-102 to Cys-199. Gly-127 contributes to the ATP binding site. Residues 149-151 form an interaction with tRNA region; the sequence is KDQ. Cys-199 serves as the catalytic Cysteine persulfide intermediate. The tract at residues 311-312 is interaction with tRNA; that stretch reads RY.

It belongs to the MnmA/TRMU family. Interacts with TusE.

It is found in the cytoplasm. The catalysed reaction is S-sulfanyl-L-cysteinyl-[protein] + uridine(34) in tRNA + AH2 + ATP = 2-thiouridine(34) in tRNA + L-cysteinyl-[protein] + A + AMP + diphosphate + H(+). In terms of biological role, catalyzes the 2-thiolation of uridine at the wobble position (U34) of tRNA(Lys), tRNA(Glu) and tRNA(Gln), leading to the formation of s(2)U34, the first step of tRNA-mnm(5)s(2)U34 synthesis. Sulfur is provided by IscS, via a sulfur-relay system. Binds ATP and its substrate tRNAs. This chain is tRNA-specific 2-thiouridylase MnmA, found in Escherichia coli O6:H1 (strain CFT073 / ATCC 700928 / UPEC).